A 118-amino-acid polypeptide reads, in one-letter code: NLYQFKNMIHCTVPSRPWWHFADYGCYCGRGGKGTPIDDLDRCCQVHDNCYEKAGKMGCWPYFTLYKYKCSKGTLTCNGRNGKCAAAVCNCDLVAANCFAGAPYINANYNIDFKKRCQ.

Intrachain disulfides connect C11–C70, C26–C117, C28–C44, C43–C98, C50–C91, C59–C84, and C77–C89. Ca(2+) is bound by residues Y27, G29, and G31. Residue H47 is part of the active site. Ca(2+) is bound at residue D48. The short motif at 52 to 69 is the Coagulation factor Xa binding motif element; that stretch reads EKAGKMGCWPYFTLYKYK. The active site involves D92.

Belongs to the phospholipase A2 family. Group I subfamily. D49 sub-subfamily. It depends on Ca(2+) as a cofactor. Expressed by the venom gland.

The protein resides in the secreted. The catalysed reaction is a 1,2-diacyl-sn-glycero-3-phosphocholine + H2O = a 1-acyl-sn-glycero-3-phosphocholine + a fatty acid + H(+). In terms of biological role, snake venom phospholipase A2 (PLA2) that shows anticoagulant activity, has cytotoxic activity and affects neuromuscular transmission in vitro. PLA2 catalyzes the calcium-dependent hydrolysis of the 2-acyl groups in 3-sn-phosphoglycerides. This Naja pallida (Red spitting cobra) protein is Basic phospholipase A2 nigexine.